The chain runs to 364 residues: sn-glycerol-3-phosphate import ATP-binding protein UgpC (364 aa).

Positions valine 4–isoleucine 235 constitute an ABC transporter domain. Glycine 37 to serine 44 provides a ligand contact to ATP.

It belongs to the ABC transporter superfamily. sn-glycerol-3-phosphate importer (TC 3.A.1.1.3) family. The complex is composed of two ATP-binding proteins (UgpC), two transmembrane proteins (UgpA and UgpE) and a solute-binding protein (UgpB).

It is found in the cell inner membrane. It catalyses the reaction sn-glycerol 3-phosphate(out) + ATP + H2O = sn-glycerol 3-phosphate(in) + ADP + phosphate + H(+). Functionally, part of the ABC transporter complex UgpBAEC involved in sn-glycerol-3-phosphate (G3P) import. Responsible for energy coupling to the transport system. In Rhodopseudomonas palustris (strain BisB5), this protein is sn-glycerol-3-phosphate import ATP-binding protein UgpC.